Here is a 487-residue protein sequence, read N- to C-terminus: Glutamyl-tRNA(Gln) amidotransferase subunit A (487 aa).

Active-site charge relay system residues include lysine 74 and serine 149. Residue serine 173 is the Acyl-ester intermediate of the active site.

This sequence belongs to the amidase family. GatA subfamily. Heterotrimer of A, B and C subunits.

It carries out the reaction L-glutamyl-tRNA(Gln) + L-glutamine + ATP + H2O = L-glutaminyl-tRNA(Gln) + L-glutamate + ADP + phosphate + H(+). Functionally, allows the formation of correctly charged Gln-tRNA(Gln) through the transamidation of misacylated Glu-tRNA(Gln) in organisms which lack glutaminyl-tRNA synthetase. The reaction takes place in the presence of glutamine and ATP through an activated gamma-phospho-Glu-tRNA(Gln). The polypeptide is Glutamyl-tRNA(Gln) amidotransferase subunit A (Synechococcus sp. (strain CC9311)).